Consider the following 301-residue polypeptide: Thyrotroph embryonic factor (301 aa).

Disordered stretches follow at residues 1-70 and 130-174; these read MSDA…ASTM and ESAS…DPSC. S30 is subject to Phosphoserine. Residues 39 to 59 are compositionally biased toward basic and acidic residues; that stretch reads KLMENPPRETRLDKEKGKEKL. The segment covering 131 to 158 has biased composition (low complexity); the sequence is SASSSTASPPSSSTAIFQPSETVSSTES. The bZIP domain maps to 231–294; the sequence is DEKYWTRRKK…GKCKTIVSKY (64 aa). The basic motif stretch occupies residues 233–253; the sequence is KYWTRRKKNNVAAKRSRDARR. Positions 254-261 are leucine-zipper; it reads LKENQITI.

It belongs to the bZIP family. PAR subfamily. Binds DNA as a homodimer or a heterodimer. Can form a heterodimer with DBP. As to expression, isoform Alpha and isoform Beta are expressed at high levels in lung, bladder, kidney, gut and brain.

The protein localises to the nucleus. Functionally, transcription factor that binds to and transactivates the TSHB promoter. Binds to a minimal DNA-binding sequence 5'-[TC][AG][AG]TTA[TC][AG]-3'. Also activates the telokin promoter in smooth muscle-specific and calcium-dependent manner. The polypeptide is Thyrotroph embryonic factor (Tef) (Mus musculus (Mouse)).